The following is a 367-amino-acid chain: Cystinosin (367 aa).

The first 22 residues, 1-22, serve as a signal peptide directing secretion; that stretch reads MIRNWLTIFILFPLKLVEKCES. Topologically, residues 23–125 are lumenal; it reads SVSLTVPPVV…LVIRSSAISI (103 aa). Asn36, Asn41, and Asn51 each carry an N-linked (GlcNAc...) (high mannose) asparagine glycan. An N-linked (GlcNAc...) asparagine glycan is attached at Asn66. Asn84, Asn104, and Asn107 each carry an N-linked (GlcNAc...) (high mannose) asparagine glycan. The PQ-loop 1 domain occupies 123 to 189; sequence ISIINQVIGW…LLWVPYIKEQ (67 aa). The helical transmembrane segment at 126 to 150 threads the bilayer; sequence INQVIGWIYFVAWSISFYPQVIMNW. At 151–159 the chain is on the cytoplasmic side; it reads RRKSVIGLS. A helical transmembrane segment spans residues 160 to 179; sequence FDFVALNLTGFVAYSVFNIG. Residue Asn166 participates in L-cystine binding. Residues 180–202 lie on the Lumenal side of the membrane; it reads LLWVPYIKEQFLLKYPNGVNPVN. The chain crosses the membrane as a helical span at residues 203 to 225; that stretch reads SNDVFFSLHAVVLTLIIIVQCCL. Asp205 lines the H(+) pocket. Topologically, residues 226–234 are cytoplasmic; the sequence is YERGGQRVS. A helical membrane pass occupies residues 235 to 257; the sequence is WPAIGFLVLAWLFAFVTMIVAAV. At 258–263 the chain is on the lumenal side; the sequence is GVTTWL. In terms of domain architecture, PQ-loop 2 spans 263-328; that stretch reads LQFLFCFSYI…QSYNNDQWTL (66 aa). A helical membrane pass occupies residues 264 to 289; sequence QFLFCFSYIKLAVTLVKYFPQAYMNF. The L-cystine site is built by Lys273, Lys280, and Tyr281. Residues 290 to 298 are Cytoplasmic-facing; sequence YYKSTEGWS. The helical transmembrane segment at 299–308 threads the bilayer; the sequence is IGNVLLDFTG. L-cystine contacts are provided by Asn301 and Asp305. Asp305 contributes to the H(+) binding site. Residues 309–331 lie on the Lumenal side of the membrane; that stretch reads GSFSLLQMFLQSYNNDQWTLIFG. The helical transmembrane segment at 332–354 threads the bilayer; it reads DPTKFGLGVFSIVFDVVFFIQHF. Residue Asp346 coordinates H(+). Over 355–367 the chain is Cytoplasmic; sequence CLYRKRPGYDQLN. Residues 362 to 366 carry the Lysosomal targeting motif motif; that stretch reads GYDQL.

This sequence belongs to the cystinosin family. As to quaternary structure, interacts with components of the V-ATPase complex. Interacts with components of the Ragulator complex. Interacts with RRAGA/RagA and RRAGC/RagC. Interacts with AP-3 complex subunit mu (AP3M1 or AP3M2). As to expression, strongly expressed in pancreas, kidney (adult and fetal), skeletal muscle, melanocytes and keratinocytes. Expressed at lower levels in placenta and heart. Weakly expressed in lung, liver and brain (adult and fetal). In terms of tissue distribution, represents 5-20 % of CTNS transcripts, with the exception of the testis that expresses both isoforms in equal proportions.

The protein resides in the lysosome membrane. The protein localises to the melanosome membrane. It is found in the cell membrane. It carries out the reaction L-cystine(out) + H(+)(out) = L-cystine(in) + H(+)(in). Its activity is regulated as follows. Switches between a lumen- and a cytosol-open conformation: pH induces conformational changes and shifts the equilibrium to facilitate the transition between the lumen- and cytosol-open conformation, thereby promoting cystine transport. Protonation of specific aspartate residues (Asp-205, Asp-305 and Asp-346) favors the cytosol-open conformation. In terms of biological role, cystine/H(+) symporter that mediates export of cystine, the oxidized dimer of cysteine, from lysosomes. Plays an important role in melanin synthesis by catalyzing cystine export from melanosomes, possibly by inhibiting pheomelanin synthesis. In addition to cystine export, also acts as a positive regulator of mTORC1 signaling in kidney proximal tubular cells, via interactions with components of the v-ATPase and Ragulator complexes. Also involved in small GTPase-regulated vesicle trafficking and lysosomal localization of LAMP2A, independently of cystine transporter activity. In Homo sapiens (Human), this protein is Cystinosin.